A 579-amino-acid polypeptide reads, in one-letter code: Type II restriction enzyme FokI (579 aa).

Active-site residues include aspartate 450, aspartate 467, and lysine 469.

Monomer, in which form it can cleave DNA. Homodimer when bound to DNA. The cofactor is Mg(2+).

The enzyme catalyses Endonucleolytic cleavage of DNA to give specific double-stranded fragments with terminal 5'-phosphates.. Functionally, an S subtype restriction enzyme that recognizes the asymmetric double-stranded sequence 5'-GGATG-3' and cleaves respectively 14 bases after G-1 (top strand) and 13 bases before C-1 (bottom strand). The protein is Type II restriction enzyme FokI of Planomicrobium okeanokoites (Planococcus okeanokoites).